A 155-amino-acid polypeptide reads, in one-letter code: 3-hydroxyacyl-[acyl-carrier-protein] dehydratase FabZ (155 aa).

Residue His57 is part of the active site.

Belongs to the thioester dehydratase family. FabZ subfamily.

Its subcellular location is the cytoplasm. The enzyme catalyses a (3R)-hydroxyacyl-[ACP] = a (2E)-enoyl-[ACP] + H2O. Functionally, involved in unsaturated fatty acids biosynthesis. Catalyzes the dehydration of short chain beta-hydroxyacyl-ACPs and long chain saturated and unsaturated beta-hydroxyacyl-ACPs. This Cereibacter sphaeroides (strain KD131 / KCTC 12085) (Rhodobacter sphaeroides) protein is 3-hydroxyacyl-[acyl-carrier-protein] dehydratase FabZ.